A 44-amino-acid chain; its full sequence is uncharacterized protein (44 aa).

A helical membrane pass occupies residues 19-39 (AVGFVVSFGFFAFLFVMATVI).

Its subcellular location is the cell membrane. This is an uncharacterized protein from Bacillus subtilis (strain 168).